We begin with the raw amino-acid sequence, 134 residues long: Profilin-4 (134 aa).

A disulfide bridge links C13 with C118. The Involved in PIP2 interaction signature appears at 84–100 (AVIRGKKGSGGITIKKT). At T114 the chain carries Phosphothreonine.

The protein belongs to the profilin family. As to quaternary structure, occurs in many kinds of cells as a complex with monomeric actin in a 1:1 ratio. In terms of processing, phosphorylated by MAP kinases.

It localises to the cytoplasm. The protein resides in the cytoskeleton. In terms of biological role, binds to actin and affects the structure of the cytoskeleton. At high concentrations, profilin prevents the polymerization of actin, whereas it enhances it at low concentrations. The protein is Profilin-4 of Olea europaea (Common olive).